The following is a 689-amino-acid chain: Protein SDA1 homolog (689 aa).

3 disordered regions span residues Asp-227–Lys-260, Glu-485–Trp-512, and Thr-623–Lys-689. The stretch at Lys-258–Asp-319 forms a coiled coil. Residues Pro-492–Trp-512 are compositionally biased toward acidic residues. Positions Arg-670–Leu-681 are enriched in basic and acidic residues.

It belongs to the SDA1 family.

The protein resides in the nucleus. It is found in the nucleolus. Its function is as follows. Required for 60S pre-ribosomal subunits export to the cytoplasm. The chain is Protein SDA1 homolog (sdad1) from Xenopus laevis (African clawed frog).